A 120-amino-acid polypeptide reads, in one-letter code: MTRVKNSVVARARHKKILKQAAGYYGARSRTYRVAYQSVIKSGQYSYRDRRQKKRLFRRLWINRINAASRKYGMSYNHLINGLQKCNVCINRKMLADIAIFDRETFSALIDKAKINCEHT.

The protein belongs to the bacterial ribosomal protein bL20 family.

In terms of biological role, binds directly to 23S ribosomal RNA and is necessary for the in vitro assembly process of the 50S ribosomal subunit. It is not involved in the protein synthesizing functions of that subunit. In Blochmanniella pennsylvanica (strain BPEN), this protein is Large ribosomal subunit protein bL20.